The sequence spans 1420 residues: DNA-directed RNA polymerase subunit beta' (1420 aa).

Zn(2+) is bound by residues Cys71, Cys73, Cys86, and Cys89. The Mg(2+) site is built by Asp461, Asp463, and Asp465. Positions 815, 889, 896, and 899 each coordinate Zn(2+).

It belongs to the RNA polymerase beta' chain family. In terms of assembly, the RNAP catalytic core consists of 2 alpha, 1 beta, 1 beta' and 1 omega subunit. When a sigma factor is associated with the core the holoenzyme is formed, which can initiate transcription. It depends on Mg(2+) as a cofactor. Zn(2+) is required as a cofactor.

It carries out the reaction RNA(n) + a ribonucleoside 5'-triphosphate = RNA(n+1) + diphosphate. DNA-dependent RNA polymerase catalyzes the transcription of DNA into RNA using the four ribonucleoside triphosphates as substrates. This is DNA-directed RNA polymerase subunit beta' from Histophilus somni (strain 129Pt) (Haemophilus somnus).